The following is a 190-amino-acid chain: dCTP deaminase, dUMP-forming (190 aa).

DCTP is bound by residues 101-106 (KSSLGR), aspartate 119, 127-129 (TLE), glutamine 148, tyrosine 162, lysine 170, and glutamine 174. Residue glutamate 129 is the Proton donor/acceptor of the active site. The interval 160–190 (HPYGSSRAGSKYQGQRGPTPSRSYQNFIRST) is disordered. The span at 171–190 (YQGQRGPTPSRSYQNFIRST) shows a compositional bias: polar residues.

The protein belongs to the dCTP deaminase family. In terms of assembly, homotrimer.

The catalysed reaction is dCTP + 2 H2O = dUMP + NH4(+) + diphosphate. It participates in pyrimidine metabolism; dUMP biosynthesis; dUMP from dCTP: step 1/1. In terms of biological role, bifunctional enzyme that catalyzes both the deamination of dCTP to dUTP and the hydrolysis of dUTP to dUMP without releasing the toxic dUTP intermediate. In Mycobacterium tuberculosis (strain ATCC 25177 / H37Ra), this protein is dCTP deaminase, dUMP-forming.